Consider the following 583-residue polypeptide: Isocitrate dehydrogenase kinase/phosphatase (583 aa).

ATP-binding positions include 315–321 and lysine 336; that span reads APGIRGM. Aspartate 371 is an active-site residue.

It belongs to the AceK family.

The protein localises to the cytoplasm. The enzyme catalyses L-seryl-[isocitrate dehydrogenase] + ATP = O-phospho-L-seryl-[isocitrate dehydrogenase] + ADP + H(+). Bifunctional enzyme which can phosphorylate or dephosphorylate isocitrate dehydrogenase (IDH) on a specific serine residue. This is a regulatory mechanism which enables bacteria to bypass the Krebs cycle via the glyoxylate shunt in response to the source of carbon. When bacteria are grown on glucose, IDH is fully active and unphosphorylated, but when grown on acetate or ethanol, the activity of IDH declines drastically concomitant with its phosphorylation. The sequence is that of Isocitrate dehydrogenase kinase/phosphatase from Salmonella heidelberg (strain SL476).